A 365-amino-acid chain; its full sequence is Methylthioribose-1-phosphate isomerase (365 aa).

Residue D249 is the Proton donor of the active site.

This sequence belongs to the eIF-2B alpha/beta/delta subunits family. MtnA subfamily.

It localises to the cytoplasm. The protein resides in the nucleus. It catalyses the reaction 5-(methylsulfanyl)-alpha-D-ribose 1-phosphate = 5-(methylsulfanyl)-D-ribulose 1-phosphate. Its pathway is amino-acid biosynthesis; L-methionine biosynthesis via salvage pathway; L-methionine from S-methyl-5-thio-alpha-D-ribose 1-phosphate: step 1/6. Catalyzes the interconversion of methylthioribose-1-phosphate (MTR-1-P) into methylthioribulose-1-phosphate (MTRu-1-P). In Ostreococcus lucimarinus (strain CCE9901), this protein is Methylthioribose-1-phosphate isomerase.